The following is a 115-amino-acid chain: Large ribosomal subunit protein bL20 (115 aa).

Belongs to the bacterial ribosomal protein bL20 family.

In terms of biological role, binds directly to 23S ribosomal RNA and is necessary for the in vitro assembly process of the 50S ribosomal subunit. It is not involved in the protein synthesizing functions of that subunit. In Malacoplasma penetrans (strain HF-2) (Mycoplasma penetrans), this protein is Large ribosomal subunit protein bL20.